Reading from the N-terminus, the 134-residue chain is Small ribosomal subunit protein uS9 (134 aa).

A disordered region spans residues 109 to 134 (DARRTEPHKPSKSTKGPRAKRQKSYR). Over residues 118–134 (PSKSTKGPRAKRQKSYR) the composition is skewed to basic residues.

This sequence belongs to the universal ribosomal protein uS9 family.

The polypeptide is Small ribosomal subunit protein uS9 (Methanococcus aeolicus (strain ATCC BAA-1280 / DSM 17508 / OCM 812 / Nankai-3)).